The following is an 81-amino-acid chain: ATP synthase subunit c (81 aa).

2 helical membrane passes run Leu-7 to Phe-27 and Ile-55 to Phe-75.

It belongs to the ATPase C chain family. F-type ATPases have 2 components, F(1) - the catalytic core - and F(0) - the membrane proton channel. F(1) has five subunits: alpha(3), beta(3), gamma(1), delta(1), epsilon(1). F(0) has three main subunits: a(1), b(2) and c(10-14). The alpha and beta chains form an alternating ring which encloses part of the gamma chain. F(1) is attached to F(0) by a central stalk formed by the gamma and epsilon chains, while a peripheral stalk is formed by the delta and b chains.

The protein resides in the cell inner membrane. Functionally, f(1)F(0) ATP synthase produces ATP from ADP in the presence of a proton or sodium gradient. F-type ATPases consist of two structural domains, F(1) containing the extramembraneous catalytic core and F(0) containing the membrane proton channel, linked together by a central stalk and a peripheral stalk. During catalysis, ATP synthesis in the catalytic domain of F(1) is coupled via a rotary mechanism of the central stalk subunits to proton translocation. Its function is as follows. Key component of the F(0) channel; it plays a direct role in translocation across the membrane. A homomeric c-ring of between 10-14 subunits forms the central stalk rotor element with the F(1) delta and epsilon subunits. The polypeptide is ATP synthase subunit c (Acinetobacter baumannii (strain ACICU)).